Reading from the N-terminus, the 493-residue chain is MTLAKHDSYDIVVVGTGAAGTAAALEAAQHGASVLLLEKGRHTGGSSNYTEGLFAVDSYLQKAQNINVSATDVLKEEVDYSKYRADSRIWRRYLDDSANTVQWLKDQGVEYEGVQAMGAGEATWHIYKGMGQAVLHDALQPQAQKLGVELLTSTTAITLHQATDGAITGVMIQSAATNETQVINTAAVILATGGYLNNPDMMQKLTHYDTRRLIPVSSGKGTGDGLRLAWQAGAQQYGTGMAMLFGGYLKDPSEPSFKYMASQMETAAGQQPLLWLNEHGERFVDEAVVYNFSYAGNALYTQNQVFSILDQGVINKMAQDGNFMGLGVYVRRGEKMTKLQAEIDAAVAANKPFIFKANTIEALATKMHLPVDQVTHSIQTYNQYCDNGQDDDFGKNPEYLVKVSQGPFYGFELNVGAFCTMGGLKVTTNNEVLDTTGQPITGLYAAGNDAAGLTGDTYGPNMPGTCVGYAFYSGRNSGRHAAQYTHQQSIVSH.

FAD is bound by residues A19, E38, S46, T50, G52, A156, D224, N448, and V467.

It belongs to the FAD-dependent oxidoreductase 2 family. FRD/SDH subfamily. The cofactor is FAD.

It carries out the reaction 4-vinylphenol + NADH + H(+) = 4-ethylphenol + NAD(+). The enzyme catalyses 3,4-dihydroxystyrene + NADH + H(+) = 4-ethylcatechol + NAD(+). The catalysed reaction is 2-methoxy-4-vinylphenol + NADH + H(+) = 4-ethyl-2-methoxyphenol + NAD(+). Functionally, involved in the production of ethylphenols during the degradation of hydroxycinnamic acids. Catalyzes the reduction of vinylphenols (4-vinylphenol (4-hydroxystyrene), 4-vinylcatechol (3,4-dihydroxystyrene), and 4-vinylguaiacol (2-methoxy-4-vinylphenol)) to their corresponding ethylphenols (4-ethylphenol, 4-ethylcatechol, and 4-ethylguaiacol, respectively) in the presence of NADH. These compounds are considered the most important flavor components of fermented soy sauce, and, on the other hand, are considered off flavor and responsible for sensorial wine and cider alteration. The 4-ethylphenol produced by the gut bacteria L.plantarum strain WCFS1 can get subsequent sulfation to 4-ethylphenyl sulfate (4EPS) by host sulfotransferase (SULT1A1); 4EPS can enter the brain and seems to alter brain activity. Therefore, this enzyme likely plays a role in gut microbiota-host metabolic interactions. This Lactiplantibacillus plantarum (strain ATCC BAA-793 / NCIMB 8826 / WCFS1) (Lactobacillus plantarum) protein is Vinyl phenol reductase.